Consider the following 799-residue polypeptide: Cadherin-8 (799 aa).

The first 29 residues, 1 to 29 (MPERLAETLMDLWTPLIILWITLPSCVYT), serve as a signal peptide directing secretion. Residues 30–61 (APMNQAHVLTTGSPLELSRQSEDMRILSRSKR) constitute a propeptide that is removed on maturation. Cadherin domains lie at 62–167 (GWVW…APEF), 168–276 (LNGP…PPKF), 277–391 (AQSL…PPVF), 392–494 (SSPT…DNAP), and 495–616 (EFAS…YVLP). The Extracellular segment spans residues 62 to 621 (GWVWNQMFVL…AYVLPIGLSM (560 aa)). A glycan (N-linked (GlcNAc...) asparagine) is linked at Asn188. 3 N-linked (GlcNAc...) asparagine glycosylation sites follow: Asn463, Asn473, and Asn544. Residues 622 to 642 (GALIAILACIILLLVIVVLFV) form a helical membrane-spanning segment. Residues 643 to 799 (TLRRHKNEPL…YSVGESDKET (157 aa)) are Cytoplasmic-facing. A Phosphoserine modification is found at Ser795.

It localises to the cell membrane. Cadherins are calcium-dependent cell adhesion proteins. They preferentially interact with themselves in a homophilic manner in connecting cells; cadherins may thus contribute to the sorting of heterogeneous cell types. The protein is Cadherin-8 (Cdh8) of Mus musculus (Mouse).